Here is a 199-residue protein sequence, read N- to C-terminus: Recombination protein RecR (199 aa).

Residues 57–72 (CAECRTFTEEEVCHIC) form a C4-type zinc finger. The 96-residue stretch at 81 to 176 (GQICVVESPA…EASRIAHGVP (96 aa)) folds into the Toprim domain.

It belongs to the RecR family.

May play a role in DNA repair. It seems to be involved in an RecBC-independent recombinational process of DNA repair. It may act with RecF and RecO. The sequence is that of Recombination protein RecR from Vibrio parahaemolyticus serotype O3:K6 (strain RIMD 2210633).